We begin with the raw amino-acid sequence, 159 residues long: Phosphopantetheine adenylyltransferase (159 aa).

Position 9 (Ser-9) interacts with substrate. Residues Ser-9–Phe-10 and His-17 each bind ATP. Positions 41, 74, and 88 each coordinate substrate. ATP is bound by residues Gly-89–Arg-91, Glu-99, and Tyr-123–Thr-129.

Belongs to the bacterial CoaD family. In terms of assembly, homohexamer. Mg(2+) serves as cofactor.

Its subcellular location is the cytoplasm. It carries out the reaction (R)-4'-phosphopantetheine + ATP + H(+) = 3'-dephospho-CoA + diphosphate. Its pathway is cofactor biosynthesis; coenzyme A biosynthesis; CoA from (R)-pantothenate: step 4/5. Functionally, reversibly transfers an adenylyl group from ATP to 4'-phosphopantetheine, yielding dephospho-CoA (dPCoA) and pyrophosphate. This is Phosphopantetheine adenylyltransferase from Arthrobacter sp. (strain FB24).